The primary structure comprises 279 residues: NADPH-dependent 7-cyano-7-deazaguanine reductase (279 aa).

86–88 (IES) is a substrate binding site. NADPH is bound at residue 88-89 (SK). The active-site Thioimide intermediate is the Cys-187. Residue Asp-194 is the Proton donor of the active site. A substrate-binding site is contributed by 226-227 (HE). Residue 255-256 (RG) coordinates NADPH.

Belongs to the GTP cyclohydrolase I family. QueF type 2 subfamily. In terms of assembly, homodimer.

The protein localises to the cytoplasm. The catalysed reaction is 7-aminomethyl-7-carbaguanine + 2 NADP(+) = 7-cyano-7-deazaguanine + 2 NADPH + 3 H(+). Its pathway is tRNA modification; tRNA-queuosine biosynthesis. Its function is as follows. Catalyzes the NADPH-dependent reduction of 7-cyano-7-deazaguanine (preQ0) to 7-aminomethyl-7-deazaguanine (preQ1). This is NADPH-dependent 7-cyano-7-deazaguanine reductase from Histophilus somni (strain 129Pt) (Haemophilus somnus).